Here is a 490-residue protein sequence, read N- to C-terminus: GTPase Der (490 aa).

2 consecutive EngA-type G domains span residues 3–166 (PVVA…VDEI) and 203–376 (IKLA…DSST). GTP is bound by residues 9-16 (GRPNVGKS), 56-60 (DTGGI), 118-121 (NKTD), 209-216 (GRPNVGKS), 256-260 (DTAGV), and 321-324 (NKWD). In terms of domain architecture, KH-like spans 377–461 (RRQSTAMLTR…PIRIQFKEGE (85 aa)).

This sequence belongs to the TRAFAC class TrmE-Era-EngA-EngB-Septin-like GTPase superfamily. EngA (Der) GTPase family. Associates with the 50S ribosomal subunit.

GTPase that plays an essential role in the late steps of ribosome biogenesis. The sequence is that of GTPase Der from Enterobacter sp. (strain 638).